Reading from the N-terminus, the 283-residue chain is Elongation factor Ts (283 aa).

The tract at residues 80–83 (TDFV) is involved in Mg(2+) ion dislocation from EF-Tu.

This sequence belongs to the EF-Ts family.

Its subcellular location is the cytoplasm. In terms of biological role, associates with the EF-Tu.GDP complex and induces the exchange of GDP to GTP. It remains bound to the aminoacyl-tRNA.EF-Tu.GTP complex up to the GTP hydrolysis stage on the ribosome. The chain is Elongation factor Ts from Citrobacter koseri (strain ATCC BAA-895 / CDC 4225-83 / SGSC4696).